A 419-amino-acid chain; its full sequence is Gamma-glutamyl phosphate reductase (419 aa).

Belongs to the gamma-glutamyl phosphate reductase family.

It is found in the cytoplasm. It catalyses the reaction L-glutamate 5-semialdehyde + phosphate + NADP(+) = L-glutamyl 5-phosphate + NADPH + H(+). It participates in amino-acid biosynthesis; L-proline biosynthesis; L-glutamate 5-semialdehyde from L-glutamate: step 2/2. Catalyzes the NADPH-dependent reduction of L-glutamate 5-phosphate into L-glutamate 5-semialdehyde and phosphate. The product spontaneously undergoes cyclization to form 1-pyrroline-5-carboxylate. This chain is Gamma-glutamyl phosphate reductase, found in Syntrophomonas wolfei subsp. wolfei (strain DSM 2245B / Goettingen).